A 538-amino-acid chain; its full sequence is ATP synthase subunit beta, mitochondrial (538 aa).

215 to 222 (GGAGVGKT) contacts ATP.

It belongs to the ATPase alpha/beta chains family. In terms of assembly, subunit of the F-type ATPase which has 2 components, CF(1) - the catalytic core - and CF(0) - the membrane proton channel. Interacts (via N-terminus) with lov-1 (via PLAT domain). Expressed in three categories of adult male sensory neurons: tail ray B neurons, HOB hook neuron and head cephalic (CEM) neurons.

The protein resides in the cell projection. It localises to the cilium. The protein localises to the mitochondrion. It is found in the mitochondrion inner membrane. It carries out the reaction ATP + H2O + 4 H(+)(in) = ADP + phosphate + 5 H(+)(out). In terms of biological role, mitochondrial membrane ATP synthase (F(1)F(0) ATP synthase or Complex V) produces ATP from ADP in the presence of a proton gradient across the membrane which is generated by electron transport complexes of the respiratory chain. F-type ATPases consist of two structural domains, F(1) - containing the extramembraneous catalytic core, and F(0) - containing the membrane proton channel, linked together by a central stalk and a peripheral stalk. During catalysis, ATP synthesis in the catalytic domain of F(1) is coupled via a rotary mechanism of the central stalk subunits to proton translocation. Subunits alpha and beta form the catalytic core in F(1). Rotation of the central stalk against the surrounding subunits leads to hydrolysis of ATP in three separate catalytic sites on the beta subunits. Required during male mating behavior for the response to hermaphrodite contact, acting with lov-1 and pkd-2. May be involved in polycystin signaling. The sequence is that of ATP synthase subunit beta, mitochondrial from Caenorhabditis elegans.